A 179-amino-acid polypeptide reads, in one-letter code: Negative modulator of initiation of replication (179 aa).

Belongs to the SeqA family. In terms of assembly, homodimer. Polymerizes to form helical filaments.

It localises to the cytoplasm. Negative regulator of replication initiation, which contributes to regulation of DNA replication and ensures that replication initiation occurs exactly once per chromosome per cell cycle. Binds to pairs of hemimethylated GATC sequences in the oriC region, thus preventing assembly of replication proteins and re-initiation at newly replicated origins. Repression is relieved when the region becomes fully methylated. This Vibrio atlanticus (strain LGP32) (Vibrio splendidus (strain Mel32)) protein is Negative modulator of initiation of replication.